The primary structure comprises 299 residues: Oxygen-dependent coproporphyrinogen-III oxidase (299 aa).

Ser-92 lines the substrate pocket. Mn(2+) contacts are provided by His-96 and His-106. His-106 serves as the catalytic Proton donor. Residue 108 to 110 (NVR) participates in substrate binding. Residues His-145 and His-175 each coordinate Mn(2+). Positions 240 to 275 (YVEFNLVWDRGTLFGLQTGGRTESILMSMPPLVRWE) are important for dimerization. Substrate is bound at residue 258 to 260 (GGR).

It belongs to the aerobic coproporphyrinogen-III oxidase family. In terms of assembly, homodimer. The cofactor is Mn(2+).

It localises to the cytoplasm. The catalysed reaction is coproporphyrinogen III + O2 + 2 H(+) = protoporphyrinogen IX + 2 CO2 + 2 H2O. Its pathway is porphyrin-containing compound metabolism; protoporphyrin-IX biosynthesis; protoporphyrinogen-IX from coproporphyrinogen-III (O2 route): step 1/1. Its function is as follows. Involved in the heme biosynthesis. Catalyzes the aerobic oxidative decarboxylation of propionate groups of rings A and B of coproporphyrinogen-III to yield the vinyl groups in protoporphyrinogen-IX. This is Oxygen-dependent coproporphyrinogen-III oxidase from Escherichia coli (strain SMS-3-5 / SECEC).